The following is a 382-amino-acid chain: tRNA (guanine(37)-N(1))-methyltransferase (382 aa).

Residues H205, 243–244 (DL), 269–270 (DA), and N291 each bind S-adenosyl-L-methionine.

It belongs to the class I-like SAM-binding methyltransferase superfamily. TRM5/TYW2 family. In terms of assembly, monomer.

The protein resides in the mitochondrion matrix. It is found in the nucleus. Its subcellular location is the cytoplasm. The catalysed reaction is guanosine(37) in tRNA + S-adenosyl-L-methionine = N(1)-methylguanosine(37) in tRNA + S-adenosyl-L-homocysteine + H(+). Functionally, specifically methylates the N1 position of guanosine-37 in various cytoplasmic and mitochondrial tRNAs. Methylation is not dependent on the nature of the nucleoside 5' of the target nucleoside. This is the first step in the biosynthesis of wybutosine (yW), a modified base adjacent to the anticodon of tRNAs and required for accurate decoding. The protein is tRNA (guanine(37)-N(1))-methyltransferase of Entamoeba histolytica (strain ATCC 30459 / HM-1:IMSS / ABRM).